The following is a 551-amino-acid chain: Prunin 1 Pru du 6.0101 (551 aa).

A signal peptide spans 1–20; sequence MAKAFVFSLCLLLVFNGCLA. 2 disulfide bridges follow: cysteine 32–cysteine 65 and cysteine 108–cysteine 374. In terms of domain architecture, Cupin type-1 1 spans 37-312; that stretch reads LQAREPDNRI…ALNVNEETAR (276 aa). Disordered regions lie at residues 111–194, 238–293, and 311–361; these read TFEE…QKTR, NPRK…NVFS, and ARNL…QQQG. Low complexity-rich tracts occupy residues 114–124, 132–148, and 168–185; these read ESQQSSQQGRQ, QQQQ…QQEQ, and QEQQ…QQFR. IgE-binding regions lie at residues 118 to 132, 145 to 159, 161 to 175, and 225 to 239; these read SSQQ…QERQ, QQEQ…QQGR, QQEE…QGQQ, and LFHV…DQNP. The segment covering 254–275 has biased composition (low complexity); the sequence is QQGQSQPRQQGEQGRPGQHQQP. Residues 281–295 form an igE-binding region; the sequence is QQEQQGSGNNVFSGF. 2 stretches are compositionally biased toward polar residues: residues 282-293 and 311-323; these read QEQQGSGNNVFS and ARNL…NRNQ. Residues 339-350 are compositionally biased toward basic and acidic residues; the sequence is GRQEREHEERQQ. A compositionally biased stretch (low complexity) spans 351-361; that stretch reads EQLQQERQQQG. Positions 367-372 match the NGXEET; peptidase recognition motif motif; it reads NGLEET. The 150-residue stretch at 380–529 folds into the Cupin type-1 2 domain; sequence ENIGNPERAD…AYQISREQAR (150 aa). The interval 510–524 is igE-binding; the sequence is RALPDEVLANAYQIS.

Belongs to the 11S seed storage protein (globulins) family. In terms of assembly, hexamer of two trimers; each subunit is composed of an acidic and a basic chain derived from a single precursor and linked by a disulfide bond. In terms of processing, proteolytically processed from a single precursor to produce an acidic and a basic chain that are linked by a disulfide bond. Expressed in seed (at protein level).

Its function is as follows. Seed storage protein. The chain is Prunin 1 Pru du 6.0101 from Prunus dulcis (Almond).